The chain runs to 328 residues: Probable tRNA-dihydrouridine synthase (328 aa).

Residue 18-20 coordinates FMN; sequence PME. Residue cysteine 105 is the Proton donor of the active site. Residues lysine 143, 208 to 210, and 232 to 233 each bind FMN; these read NGD and GR.

It belongs to the Dus family. FMN is required as a cofactor.

The catalysed reaction is a 5,6-dihydrouridine in tRNA + NAD(+) = a uridine in tRNA + NADH + H(+). It catalyses the reaction a 5,6-dihydrouridine in tRNA + NADP(+) = a uridine in tRNA + NADPH + H(+). Catalyzes the synthesis of 5,6-dihydrouridine (D), a modified base found in the D-loop of most tRNAs, via the reduction of the C5-C6 double bond in target uridines. The sequence is that of Probable tRNA-dihydrouridine synthase (dus) from Staphylococcus aureus (strain MRSA252).